We begin with the raw amino-acid sequence, 201 residues long: Cytochrome c oxidase assembly protein CtaG (201 aa).

Residues 1–13 (MTDQGENEKKQRR) lie on the Cytoplasmic side of the membrane. The chain crosses the membrane as a helical; Signal-anchor for type II membrane protein span at residues 14–36 (SNATIAVACLSFFVCMIGAAYAS). The Periplasmic portion of the chain corresponds to 37-201 (VPLYRIFCQV…KAVGSTRNGG (165 aa)).

The protein belongs to the COX11/CtaG family.

The protein localises to the cell inner membrane. In terms of biological role, exerts its effect at some terminal stage of cytochrome c oxidase synthesis, probably by being involved in the insertion of the copper B into subunit I. This Brucella ovis (strain ATCC 25840 / 63/290 / NCTC 10512) protein is Cytochrome c oxidase assembly protein CtaG.